We begin with the raw amino-acid sequence, 513 residues long: Nuclear pore complex protein NUP58 (513 aa).

Disordered regions lie at residues 28-62, 217-239, and 356-513; these read QTNSIFSQSQPQQTNSIFSQSQPQQTNSIFSQPQQ, SVGSQPSQGQGTNPAPASSGQQQ, and RETA…TTRR. The segment covering 30–50 has biased composition (polar residues); that stretch reads NSIFSQSQPQQTNSIFSQSQP. Composition is skewed to low complexity over residues 51–62 and 217–227; these read QQTNSIFSQPQQ and SVGSQPSQGQG. A compositionally biased stretch (basic and acidic residues) spans 356 to 365; that stretch reads RETAKQEAAA. Low complexity predominate over residues 377–386; that stretch reads STTSTQPSTQ. Positions 393–427 are enriched in polar residues; it reads SSATPGGSNPPQTSVPTSNPSSGAGFSFLNTPASG. Residues 428 to 446 are compositionally biased toward low complexity; that stretch reads PSSSLFATPSSTAPTSSLF. 6 repeat units span residues 446–447, 458–459, 466–467, 473–474, 486–487, and 497–498. Residues 446–498 are 6 X 2 AA repeats of F-G; that stretch reads FGPSPTPTQTPLFGSSPASTFGSTQSLFGQTTPSLTMPSQFGGATPGSGASFG. A compositionally biased stretch (polar residues) spans 452 to 484; that stretch reads PTQTPLFGSSPASTFGSTQSLFGQTTPSLTMPS. Residues 504-513 are compositionally biased toward basic residues; that stretch reads SRPKSRTTRR.

It belongs to the NUP58 family. In terms of assembly, part of the nuclear pore complex (NPC). The NPC has an eight-fold symmetrical structure comprising a central transport channel and two rings, the cytoplasmic and nuclear rings, to which eight filaments are attached. The cytoplasmic filaments have loose ends, while the nuclear filaments are joined in a distal ring, forming a nuclear basket. NPCs are highly dynamic in configuration and composition, and can be devided in 3 subcomplexes, the NUP62 subcomplex, the NUP107-160 subcomplex and the NUP93 subcomplex, containing approximately 30 different nucleoporin proteins. Interacts with GAI, NUP62, SKP1A and SKP1B. As to expression, ubiquitous. Higherst expression in cauline leaves, lowest in roots.

The protein resides in the nucleus envelope. The protein localises to the nucleus. It is found in the nuclear pore complex. In terms of biological role, involved in nucleocytoplasmic trafficking. May have regulatory roles in the gibberellin pathway, in auxin signaling and in light perception. This Arabidopsis thaliana (Mouse-ear cress) protein is Nuclear pore complex protein NUP58.